Consider the following 117-residue polypeptide: Cell division protein FtsL (117 aa).

Residues 1-35 (MSNLAYQPEKQQRHAISPEKKVIVKKRASITLGEK) lie on the Cytoplasmic side of the membrane. A helical membrane pass occupies residues 36-56 (VLLVLFAAAVLSVSLLIVSKA). Residues 57-117 (YAAYQTNIEV…KDKKVKNIQE (61 aa)) are Extracellular-facing.

This sequence belongs to the FtsL family. As to quaternary structure, monomer. Interacts with DivIB and DivIC. Interaction with DivIC stabilizes FtsL against RasP cleavage. Cleaved by RasP. Cleavage is important for turnover and function of FtsL.

It is found in the cell membrane. Its function is as follows. Essential cell division protein that may play a structural role. Probably involved in the regulation of the timing of cell division. Also required for sporulation. This chain is Cell division protein FtsL, found in Bacillus subtilis (strain 168).